The primary structure comprises 475 residues: Lactate utilization protein B (475 aa).

2 4Fe-4S ferredoxin-type domains span residues 304-334 (GTEFQAALHCIRCAACINVCPVYRHVGGHSY) and 353-382 (YEDHKELPYASSLCAACTDACPVKIPLHEL). [4Fe-4S] cluster is bound by residues C313, C316, C319, C323, C366, C369, and C373.

It belongs to the LutB/YkgF family.

In terms of biological role, is involved in L-lactate degradation and allows cells to grow with lactate as the sole carbon source. Has probably a role as an electron transporter during oxidation of L-lactate. This chain is Lactate utilization protein B, found in Shouchella clausii (strain KSM-K16) (Alkalihalobacillus clausii).